The sequence spans 524 residues: MLKDIHQHRILILDFGSQYAQLIARRVREIGVYCELMPCDIDEETIRDFNPHGIILSGGPETVTLSHTLRAPAFIFEIGCPVLGICYGMQTMAYQLGGKVNRTAKAEFGHAQLRVLNPAFLFDGIEDQVSPQGEPLLDVWMSHGDIVSELPPGFEATACTDNSPLAAMADFKRRFFGLQFHPEVTHTPQGHRILAHFVIHICQCIPNWTTKHIIEDSIRDIQEKVGKEQVIVGLSGGVDSAVTATLVRKAIGDQLVCVLVDTGLLRLNEVDEVLNVFQKHLGAKVICVDAKDRFMKALKGISDPEEKRKIAGEQFIRVFEEQAKKLNVKWLGQGTIYPDVIESAKTKTGKGHIIKTHHNVGGLPLNMELKLIEPLRELFKDEVRKLGLELGLPADLIYRHPFPGPGLAIRILGEVNAEYINILKQADAIFIEELKKSDYYHQVSQAFAVFMPLKSVGVKGDARHYGYIIALRAVKTVDFMTAQWADLPHEFLSKVSHRIVNEIKEVSRVVYDMTNKPPATIEWE.

The region spanning R9–N207 is the Glutamine amidotransferase type-1 domain. C86 (nucleophile) is an active-site residue. Residues H181 and E183 contribute to the active site. The GMPS ATP-PPase domain occupies W208–R399. S235–A241 provides a ligand contact to ATP.

As to quaternary structure, homodimer.

It carries out the reaction XMP + L-glutamine + ATP + H2O = GMP + L-glutamate + AMP + diphosphate + 2 H(+). It participates in purine metabolism; GMP biosynthesis; GMP from XMP (L-Gln route): step 1/1. Functionally, catalyzes the synthesis of GMP from XMP. The chain is GMP synthase [glutamine-hydrolyzing] from Coxiella burnetii (strain CbuK_Q154) (Coxiella burnetii (strain Q154)).